The primary structure comprises 363 residues: Carbamoyl phosphate synthase small chain (363 aa).

A CPSase region spans residues 1–173 (MMKAFLVLDN…SKYIFGTHTG (173 aa)). L-glutamine-binding residues include Ser46, Gly225, and Gly227. The 187-residue stretch at 177–363 (KLAVYDYGVK…YDLVEKTKKG (187 aa)) folds into the Glutamine amidotransferase type-1 domain. Cys253 acts as the Nucleophile in catalysis. 5 residues coordinate L-glutamine: Leu254, Gln257, Asn295, Gly297, and Phe298. Residues His336 and Glu338 contribute to the active site.

The protein belongs to the CarA family. As to quaternary structure, composed of two chains; the small (or glutamine) chain promotes the hydrolysis of glutamine to ammonia, which is used by the large (or ammonia) chain to synthesize carbamoyl phosphate. Tetramer of heterodimers (alpha,beta)4.

It catalyses the reaction hydrogencarbonate + L-glutamine + 2 ATP + H2O = carbamoyl phosphate + L-glutamate + 2 ADP + phosphate + 2 H(+). The enzyme catalyses L-glutamine + H2O = L-glutamate + NH4(+). It participates in amino-acid biosynthesis; L-arginine biosynthesis; carbamoyl phosphate from bicarbonate: step 1/1. It functions in the pathway pyrimidine metabolism; UMP biosynthesis via de novo pathway; (S)-dihydroorotate from bicarbonate: step 1/3. Its function is as follows. Small subunit of the glutamine-dependent carbamoyl phosphate synthetase (CPSase). CPSase catalyzes the formation of carbamoyl phosphate from the ammonia moiety of glutamine, carbonate, and phosphate donated by ATP, constituting the first step of 2 biosynthetic pathways, one leading to arginine and/or urea and the other to pyrimidine nucleotides. The small subunit (glutamine amidotransferase) binds and cleaves glutamine to supply the large subunit with the substrate ammonia. The polypeptide is Carbamoyl phosphate synthase small chain (Leptospira interrogans serogroup Icterohaemorrhagiae serovar copenhageni (strain Fiocruz L1-130)).